We begin with the raw amino-acid sequence, 904 residues long: Protein translocase subunit SecA (904 aa).

Residues glutamine 89, 107 to 111 (GEGKT), and aspartate 496 each bind ATP. A disordered region spans residues 870-904 (GGFQELSSGTPSPTVTVTTSSGGGTERKTSRRRKR). Low complexity predominate over residues 876 to 889 (SSGTPSPTVTVTTS).

This sequence belongs to the SecA family. Monomer and homodimer. Part of the essential Sec protein translocation apparatus which comprises SecA, SecYEG and auxiliary proteins SecDF. Other proteins may also be involved.

It is found in the cell inner membrane. The protein localises to the cytoplasm. The enzyme catalyses ATP + H2O + cellular proteinSide 1 = ADP + phosphate + cellular proteinSide 2.. Part of the Sec protein translocase complex. Interacts with the SecYEG preprotein conducting channel. Has a central role in coupling the hydrolysis of ATP to the transfer of proteins into and across the cell membrane, serving as an ATP-driven molecular motor driving the stepwise translocation of polypeptide chains across the membrane. The sequence is that of Protein translocase subunit SecA from Leptospira borgpetersenii serovar Hardjo-bovis (strain JB197).